The primary structure comprises 348 residues: Ileal sodium/bile acid cotransporter (348 aa).

Residues 1 to 28 (MDNSSVCPPNATVCEGDSCVVPESNFNA) lie on the Extracellular side of the membrane. Asn3 and Asn10 each carry an N-linked (GlcNAc...) asparagine glycan. The helical transmembrane segment at 29 to 49 (ILNTVMSTVLTILLAMVMFSM) threads the bilayer. Over 50–87 (GCNVEVHKFLGHIKRPWGIFVGFLCQFGIMPLTGFILS) the chain is Cytoplasmic. Residues 88-108 (VASGILPVQAVVVLIMGCCPG) traverse the membrane as a helical segment. Over 109-126 (GTGSNILAYWIDGDMDLS) the chain is Extracellular. Residues 127-147 (VSMTTCSTLLALGMMPLCLFV) traverse the membrane as a helical segment. Residues 148 to 157 (YTKMWVDSGT) lie on the Cytoplasmic side of the membrane. The chain crosses the membrane as a helical span at residues 158–178 (IVIPYDSIGISLVALVIPVSF). Topologically, residues 179 to 195 (GMFVNHKWPQKAKIILK) are extracellular. The helical transmembrane segment at 196–216 (IGSITGVILIVLIAVIGGILY) threads the bilayer. The Cytoplasmic segment spans residues 217 to 224 (QSAWIIEP). The chain crosses the membrane as a helical span at residues 225-245 (KLWIIGTIFPIAGYSLGFFLA). Residues 246–284 (RLAGQPWYRCRTVALETGMQNTQLCSTIVQLSFSPEDLN) lie on the Extracellular side of the membrane. A helical transmembrane segment spans residues 285–305 (LVFTFPLIYTVFQLVFAAVIL). The Cytoplasmic portion of the chain corresponds to 306–348 (GIYVTYRKCYGKNDAEFLEKTDNEMDSRPSFDETNKGFQPDEK). The tract at residues 328–348 (NEMDSRPSFDETNKGFQPDEK) is disordered. Ser335 bears the Phosphoserine mark.

Belongs to the bile acid:sodium symporter (BASS) (TC 2.A.28) family. As to quaternary structure, monomer and homodimer. Expressed in ileum.

The protein resides in the membrane. It catalyses the reaction taurocholate(out) + 2 Na(+)(out) = taurocholate(in) + 2 Na(+)(in). The catalysed reaction is cholate(out) + 2 Na(+)(out) = cholate(in) + 2 Na(+)(in). It carries out the reaction taurochenodeoxycholate(out) + 2 Na(+)(out) = taurochenodeoxycholate(in) + 2 Na(+)(in). The enzyme catalyses tauroursodeoxycholate(out) + 2 Na(+)(out) = tauroursodeoxycholate(in) + 2 Na(+)(in). It catalyses the reaction glycocholate(out) + 2 Na(+)(out) = glycocholate(in) + 2 Na(+)(in). The catalysed reaction is tauronorcholate(out) + 2 Na(+)(out) = tauronorcholate(in) + 2 Na(+)(in). It carries out the reaction tauroallocholate(out) + 2 Na(+)(out) = tauroallocholate(in) + 2 Na(+)(in). The enzyme catalyses taurodeoxycholate(out) + 2 Na(+)(out) = taurodeoxycholate(in) + 2 Na(+)(in). It catalyses the reaction tauro-beta-muricholate(out) + 2 Na(+)(out) = tauro-beta-muricholate(in) + 2 Na(+)(in). Plays a critical role in the sodium-dependent reabsorption of bile acids from the lumen of the small intestine. Transports various bile acids, unconjugated or conjugated, such as cholate and taurocholate. Also responsible for bile acid transport in the renal proximal tubules, a salvage mechanism that helps conserve bile acids. Works collaboratively with the Na(+)-taurocholate cotransporting polypeptide (NTCP), the organic solute transporter (OST), and the bile salt export pump (BSEP), to ensure efficacious biological recycling of bile acids during enterohepatic circulation. This chain is Ileal sodium/bile acid cotransporter (Slc10a2), found in Mus musculus (Mouse).